The sequence spans 936 residues: Protocadherin gamma-A10 (936 aa).

A signal peptide spans 1–32 (MAAQRNRSKESKDCSGLVLLCLFFGIPWEAGA). 6 consecutive Cadherin domains span residues 33–137 (RQIS…APKF), 138–246 (QAEN…APVF), 247–351 (TLPE…SPEL), 352–456 (TITS…PPTF), 457–566 (SQVS…APEI), and 574–687 (DGST…SPAN). Residues 33 to 696 (RQISYSIPEE…NSETSDLTLY (664 aa)) lie on the Extracellular side of the membrane. N-linked (GlcNAc...) asparagine glycosylation occurs at asparagine 51. Asparagine 423 and asparagine 549 each carry an N-linked (GlcNAc...) asparagine glycan. A helical membrane pass occupies residues 697–717 (LVVAVAAVSCVFLAFVIVLLA). Residues 718–936 (HRLRRWHKSR…KKKSGKKEKK (219 aa)) lie on the Cytoplasmic side of the membrane. Disordered stretches follow at residues 806–845 (EDTPLVPQAPPNTDWRFSQAQRPGTSGSQNGDDTGTWPNN) and 906–936 (ATLTNAAGKRDGKAPAGGNGNKKKSGKKEKK). A compositionally biased stretch (polar residues) spans 820–845 (WRFSQAQRPGTSGSQNGDDTGTWPNN). Residues 926 to 936 (NKKKSGKKEKK) are compositionally biased toward basic residues.

It localises to the cell membrane. In terms of biological role, potential calcium-dependent cell-adhesion protein. May be involved in the establishment and maintenance of specific neuronal connections in the brain. This Homo sapiens (Human) protein is Protocadherin gamma-A10 (PCDHGA10).